The primary structure comprises 70 residues: Large ribosomal subunit protein bL28 (70 aa).

Belongs to the bacterial ribosomal protein bL28 family.

In Maridesulfovibrio salexigens (strain ATCC 14822 / DSM 2638 / NCIMB 8403 / VKM B-1763) (Desulfovibrio salexigens), this protein is Large ribosomal subunit protein bL28.